The primary structure comprises 1131 residues: Kinesin-like protein CG14535 (1131 aa).

Over residues 1 to 11 (MATTSTSNMSR) the composition is skewed to polar residues. The interval 1 to 25 (MATTSTSNMSRNGGFCGALQRAPPP) is disordered. Positions 44–396 (KVKVMLRVAD…IQIASRIHRL (353 aa)) constitute a Kinesin motor domain. Disordered stretches follow at residues 472-494 (ALKGSGLEKPPSKSASNSPMMMK), 693-753 (DLPD…SRDI), 905-926 (PAYRLTPSPPKQPSHSPSQGSL), and 1016-1072 (TSSE…QRHR). Residues 483–494 (SKSASNSPMMMK) are compositionally biased toward low complexity. Polar residues predominate over residues 1016 to 1032 (TSSEAYDSGHDSNSTPR).

The protein belongs to the TRAFAC class myosin-kinesin ATPase superfamily. Kinesin family. KIF26 subfamily.

Its subcellular location is the cytoplasm. It is found in the cytoskeleton. This Drosophila melanogaster (Fruit fly) protein is Kinesin-like protein CG14535.